A 284-amino-acid polypeptide reads, in one-letter code: ATP synthase gamma chain (284 aa).

This sequence belongs to the ATPase gamma chain family. F-type ATPases have 2 components, CF(1) - the catalytic core - and CF(0) - the membrane proton channel. CF(1) has five subunits: alpha(3), beta(3), gamma(1), delta(1), epsilon(1). CF(0) has three main subunits: a, b and c.

It localises to the cell membrane. Functionally, produces ATP from ADP in the presence of a proton gradient across the membrane. The gamma chain is believed to be important in regulating ATPase activity and the flow of protons through the CF(0) complex. The protein is ATP synthase gamma chain of Pelotomaculum thermopropionicum (strain DSM 13744 / JCM 10971 / SI).